Here is a 327-residue protein sequence, read N- to C-terminus: 4-hydroxythreonine-4-phosphate dehydrogenase (327 aa).

Residues His134 and Thr135 each coordinate substrate. Residues His164, His209, and His264 each coordinate a divalent metal cation. Substrate contacts are provided by Lys272, Asn281, and Arg290.

This sequence belongs to the PdxA family. Homodimer. It depends on Zn(2+) as a cofactor. Mg(2+) is required as a cofactor. Co(2+) serves as cofactor.

The protein localises to the cytoplasm. The catalysed reaction is 4-(phosphooxy)-L-threonine + NAD(+) = 3-amino-2-oxopropyl phosphate + CO2 + NADH. The protein operates within cofactor biosynthesis; pyridoxine 5'-phosphate biosynthesis; pyridoxine 5'-phosphate from D-erythrose 4-phosphate: step 4/5. In terms of biological role, catalyzes the NAD(P)-dependent oxidation of 4-(phosphooxy)-L-threonine (HTP) into 2-amino-3-oxo-4-(phosphooxy)butyric acid which spontaneously decarboxylates to form 3-amino-2-oxopropyl phosphate (AHAP). The chain is 4-hydroxythreonine-4-phosphate dehydrogenase from Shewanella frigidimarina (strain NCIMB 400).